Consider the following 93-residue polypeptide: Acylphosphatase (93 aa).

The 87-residue stretch at 6–92 (RAHVWVGGKV…EGLTHFEVLR (87 aa)) folds into the Acylphosphatase-like domain. Residues arginine 21 and asparagine 39 contribute to the active site.

The protein belongs to the acylphosphatase family.

The catalysed reaction is an acyl phosphate + H2O = a carboxylate + phosphate + H(+). The polypeptide is Acylphosphatase (acyP) (Gloeobacter violaceus (strain ATCC 29082 / PCC 7421)).